Here is a 275-residue protein sequence, read N- to C-terminus: 3-methyl-2-oxobutanoate hydroxymethyltransferase (275 aa).

Mg(2+) is bound by residues Asp-44 and Asp-83. 3-methyl-2-oxobutanoate-binding positions include 44–45, Asp-83, and Lys-113; that span reads DS. Glu-115 lines the Mg(2+) pocket. The Proton acceptor role is filled by Glu-182.

The protein belongs to the PanB family. Homodecamer; pentamer of dimers. Mg(2+) serves as cofactor.

Its subcellular location is the cytoplasm. It catalyses the reaction 3-methyl-2-oxobutanoate + (6R)-5,10-methylene-5,6,7,8-tetrahydrofolate + H2O = 2-dehydropantoate + (6S)-5,6,7,8-tetrahydrofolate. Its pathway is cofactor biosynthesis; (R)-pantothenate biosynthesis; (R)-pantoate from 3-methyl-2-oxobutanoate: step 1/2. Its function is as follows. Catalyzes the reversible reaction in which hydroxymethyl group from 5,10-methylenetetrahydrofolate is transferred onto alpha-ketoisovalerate to form ketopantoate. The chain is 3-methyl-2-oxobutanoate hydroxymethyltransferase from Clostridium botulinum (strain Alaska E43 / Type E3).